Here is a 268-residue protein sequence, read N- to C-terminus: Glucosamine-6-phosphate deaminase (268 aa).

The Proton acceptor; for enolization step role is filled by Asp72. Asp141 serves as the catalytic For ring-opening step. His143 serves as the catalytic Proton acceptor; for ring-opening step. Residue Glu148 is the For ring-opening step of the active site.

The protein belongs to the glucosamine/galactosamine-6-phosphate isomerase family. NagB subfamily. As to quaternary structure, homohexamer.

The catalysed reaction is alpha-D-glucosamine 6-phosphate + H2O = beta-D-fructose 6-phosphate + NH4(+). Its pathway is amino-sugar metabolism; N-acetylneuraminate degradation; D-fructose 6-phosphate from N-acetylneuraminate: step 5/5. Its activity is regulated as follows. Allosterically activated by N-acetylglucosamine 6-phosphate (GlcNAc6P). Its function is as follows. Catalyzes the reversible isomerization-deamination of glucosamine 6-phosphate (GlcN6P) to form fructose 6-phosphate (Fru6P) and ammonium ion. This chain is Glucosamine-6-phosphate deaminase, found in Histophilus somni (strain 2336) (Haemophilus somnus).